We begin with the raw amino-acid sequence, 183 residues long: Protein Syd (183 aa).

This sequence belongs to the Syd family.

The protein resides in the cell inner membrane. Its function is as follows. Interacts with the SecY protein in vivo. May bind preferentially to an uncomplexed state of SecY, thus functioning either as a chelating agent for excess SecY in the cell or as a regulatory factor that negatively controls the translocase function. The chain is Protein Syd from Idiomarina loihiensis (strain ATCC BAA-735 / DSM 15497 / L2-TR).